The chain runs to 268 residues: Ubiquinone/menaquinone biosynthesis C-methyltransferase UbiE (268 aa).

The tract at residues 1-23 (MTDQHAFATEQVQLDPTLSPTTE) is disordered. The segment covering 10–23 (EQVQLDPTLSPTTE) has biased composition (polar residues). Residues Thr91, Asp112, 140 to 141 (NA), and Ser157 each bind S-adenosyl-L-methionine.

This sequence belongs to the class I-like SAM-binding methyltransferase superfamily. MenG/UbiE family.

It carries out the reaction a 2-demethylmenaquinol + S-adenosyl-L-methionine = a menaquinol + S-adenosyl-L-homocysteine + H(+). It catalyses the reaction a 2-methoxy-6-(all-trans-polyprenyl)benzene-1,4-diol + S-adenosyl-L-methionine = a 5-methoxy-2-methyl-3-(all-trans-polyprenyl)benzene-1,4-diol + S-adenosyl-L-homocysteine + H(+). The protein operates within quinol/quinone metabolism; menaquinone biosynthesis; menaquinol from 1,4-dihydroxy-2-naphthoate: step 2/2. Its pathway is cofactor biosynthesis; ubiquinone biosynthesis. Methyltransferase required for the conversion of demethylmenaquinol (DMKH2) to menaquinol (MKH2) and the conversion of 2-polyprenyl-6-methoxy-1,4-benzoquinol (DDMQH2) to 2-polyprenyl-3-methyl-6-methoxy-1,4-benzoquinol (DMQH2). The chain is Ubiquinone/menaquinone biosynthesis C-methyltransferase UbiE from Pasteurella multocida (strain Pm70).